The following is a 533-amino-acid chain: Glucose-6-phosphate isomerase (533 aa).

Glu-341 acts as the Proton donor in catalysis. Active-site residues include His-372 and Lys-501.

Belongs to the GPI family.

Its subcellular location is the cytoplasm. It catalyses the reaction alpha-D-glucose 6-phosphate = beta-D-fructose 6-phosphate. It participates in carbohydrate biosynthesis; gluconeogenesis. Its pathway is carbohydrate degradation; glycolysis; D-glyceraldehyde 3-phosphate and glycerone phosphate from D-glucose: step 2/4. Catalyzes the reversible isomerization of glucose-6-phosphate to fructose-6-phosphate. This Cereibacter sphaeroides (strain ATCC 17025 / ATH 2.4.3) (Rhodobacter sphaeroides) protein is Glucose-6-phosphate isomerase.